Consider the following 127-residue polypeptide: Aspartate 1-decarboxylase (127 aa).

The Schiff-base intermediate with substrate; via pyruvic acid role is filled by serine 25. Serine 25 carries the pyruvic acid (Ser) modification. Threonine 57 contributes to the substrate binding site. Tyrosine 58 functions as the Proton donor in the catalytic mechanism. 73–75 (GAA) provides a ligand contact to substrate.

The protein belongs to the PanD family. As to quaternary structure, heterooctamer of four alpha and four beta subunits. It depends on pyruvate as a cofactor. Is synthesized initially as an inactive proenzyme, which is activated by self-cleavage at a specific serine bond to produce a beta-subunit with a hydroxyl group at its C-terminus and an alpha-subunit with a pyruvoyl group at its N-terminus.

Its subcellular location is the cytoplasm. The catalysed reaction is L-aspartate + H(+) = beta-alanine + CO2. It functions in the pathway cofactor biosynthesis; (R)-pantothenate biosynthesis; beta-alanine from L-aspartate: step 1/1. In terms of biological role, catalyzes the pyruvoyl-dependent decarboxylation of aspartate to produce beta-alanine. The chain is Aspartate 1-decarboxylase from Staphylococcus aureus (strain JH1).